The primary structure comprises 1065 residues: MPLDKTIKKVLIIGSGPNNIGQAAEFDYSGTQACKAVKEEGIETVLVNSNPATIMTDSHIADKVYIEPLTEEAVEKIIEKERPDGILAGFGGQTALNLAMNLNDAGVLDKYNVRLLGINSEAIKKAEDREEFKNLMEEIDEPVPKSIIATHIDECIDFVNKFGLPVIIRPAFTLGGTGGGIASTMEELKEICDRGIKMSPIGQILLEQSVAGWKELEYEVMRDAKDNCIIVCNMENLDPVGVHTGDSIVTAPSQTLTDKEYHMLRHSALKIIRNLKIEGGCNIQFALNPKSNDYIVIEVNPRVSRSSALASKAAGYPIAKIAAKIAVGYSLDELKNYVTKNSSACFEPALDYVVVKIPKWPFDKFNTAERHLGTQMKATGEVMAIDRDFESALLKAVTSLEGKISGLRLEKFEYTTVRELLEKIKKQDDERIFAIAEAFRRGVDVKQIHEVTEIDNWYLNGINRIIDMEKELQDKNNKDKDKSIIKAKKMGFTVAEIARITSLEEGKIKNILNVNNVKPVFKMVDTCSGEFEAETPYYYSSYENEDENEVTDDKKIVVIGSGPIRIGQGIEFDYCCVHGVWAIKEAGYKSIIINNNPETVSTDFDTADKLYFESLYIDNVMNIIEKEKPEGVIVQFGGQTAINLADKLYKNGVKILGTSFESIDLAEDREKFSELLKELNIPQAKGMAVTSMEEAYEAVKEIGYPVIVRPSYVIGGRAMQVVYDKLALQKYMTEAVTLSTEHPVLIDKYIKGTEIEVDTISDGENILIPGIMEHIERTGVHSGDSITMYPYHTLPKEVVDKLVKYTKSLAKALEVKGLMNIQYVYDGENVYVIEVNPRASRTVPILSKVTGVPMVKLAVEILTGKNLKELGYGVDLKKDNKLYAVKVPVFSNEKLANVDIYLGPEMRSTGEVMGIDSDFEVAIYKGFRAAGIEVPKDGGNLYVSIKDVDKQESVPIIKKYTEFGYKIYASLGTGKFLQKQGIDCEVLRTDDLMKAIGDGKINLIINSPTRGNTVGTRGFSIRRKAAEYKVGAFTCIDTAKAFLTAIKVKREEAKVEYRAMKEYFK.

The interval 1–401 (MPLDKTIKKV…ALLKAVTSLE (401 aa)) is carboxyphosphate synthetic domain. ATP is bound by residues R129, R169, G175, G176, Q208, V210, E215, G241, V242, H243, Q284, and E298. An ATP-grasp 1 domain is found at 133–327 (KNLMEEIDEP…IAKIAAKIAV (195 aa)). 3 residues coordinate Mg(2+): Q284, E298, and N300. The Mn(2+) site is built by Q284, E298, and N300. An oligomerization domain region spans residues 402-548 (GKISGLRLEK…YSSYENEDEN (147 aa)). Positions 549–931 (EVTDDKKIVV…AIYKGFRAAG (383 aa)) are carbamoyl phosphate synthetic domain. The region spanning 673 to 863 (SELLKELNIP…MVKLAVEILT (191 aa)) is the ATP-grasp 2 domain. ATP is bound by residues R709, K748, I750, E754, G779, V780, H781, S782, Q822, and E834. Q822, E834, and N836 together coordinate Mg(2+). Residues Q822, E834, and N836 each coordinate Mn(2+). One can recognise an MGS-like domain in the interval 932–1065 (IEVPKDGGNL…EYRAMKEYFK (134 aa)). Residues 932 to 1065 (IEVPKDGGNL…EYRAMKEYFK (134 aa)) are allosteric domain.

This sequence belongs to the CarB family. Composed of two chains; the small (or glutamine) chain promotes the hydrolysis of glutamine to ammonia, which is used by the large (or ammonia) chain to synthesize carbamoyl phosphate. Tetramer of heterodimers (alpha,beta)4. Mg(2+) serves as cofactor. The cofactor is Mn(2+).

It carries out the reaction hydrogencarbonate + L-glutamine + 2 ATP + H2O = carbamoyl phosphate + L-glutamate + 2 ADP + phosphate + 2 H(+). It catalyses the reaction hydrogencarbonate + NH4(+) + 2 ATP = carbamoyl phosphate + 2 ADP + phosphate + 2 H(+). It participates in amino-acid biosynthesis; L-arginine biosynthesis; carbamoyl phosphate from bicarbonate: step 1/1. Its pathway is pyrimidine metabolism; UMP biosynthesis via de novo pathway; (S)-dihydroorotate from bicarbonate: step 1/3. In terms of biological role, large subunit of the glutamine-dependent carbamoyl phosphate synthetase (CPSase). CPSase catalyzes the formation of carbamoyl phosphate from the ammonia moiety of glutamine, carbonate, and phosphate donated by ATP, constituting the first step of 2 biosynthetic pathways, one leading to arginine and/or urea and the other to pyrimidine nucleotides. The large subunit (synthetase) binds the substrates ammonia (free or transferred from glutamine from the small subunit), hydrogencarbonate and ATP and carries out an ATP-coupled ligase reaction, activating hydrogencarbonate by forming carboxy phosphate which reacts with ammonia to form carbamoyl phosphate. The protein is Carbamoyl phosphate synthase large chain of Clostridium acetobutylicum (strain ATCC 824 / DSM 792 / JCM 1419 / IAM 19013 / LMG 5710 / NBRC 13948 / NRRL B-527 / VKM B-1787 / 2291 / W).